The primary structure comprises 439 residues: Serine/threonine-protein kinase 2 (439 aa).

One can recognise a Protein kinase domain in the interval Asn87–Asn439. ATP contacts are provided by residues Ile93–Val101 and Lys117. Asp307 acts as the Proton acceptor in catalysis.

It belongs to the protein kinase superfamily. Ser/Thr protein kinase family. In terms of processing, phosphorylated in vivo. Autophosphorylated in vitro.

The protein resides in the host endoplasmic reticulum. It is found in the host endoplasmic reticulum-Golgi intermediate compartment. It carries out the reaction L-seryl-[protein] + ATP = O-phospho-L-seryl-[protein] + ADP + H(+). The enzyme catalyses L-threonyl-[protein] + ATP = O-phospho-L-threonyl-[protein] + ADP + H(+). Essential serine-protein kinase involved in the early stage of virion morphogenesis. The chain is Serine/threonine-protein kinase 2 (OPG054) from Vaccinia virus (strain Tian Tan) (VACV).